We begin with the raw amino-acid sequence, 208 residues long: Large ribosomal subunit protein bL25 (208 aa).

It belongs to the bacterial ribosomal protein bL25 family. CTC subfamily. As to quaternary structure, part of the 50S ribosomal subunit; part of the 5S rRNA/L5/L18/L25 subcomplex. Contacts the 5S rRNA. Binds to the 5S rRNA independently of L5 and L18.

Functionally, this is one of the proteins that binds to the 5S RNA in the ribosome where it forms part of the central protuberance. The sequence is that of Large ribosomal subunit protein bL25 from Phenylobacterium zucineum (strain HLK1).